We begin with the raw amino-acid sequence, 841 residues long: MANANGKAATSLPEKISAKANPEADDATEIAGNIVYHAKYSPHFSPLKFGPEQALYATAESLRDRLIQLWNETYVHFNKVDPKQTYYLSMEYLQGRALTNAIGNLNLQGPYADALRTLGYELEEIAEQEKDAALGNGGLGRLASCFLDSMATLNLPAWGYGLRYRHGLFKQIITKKGQEEIPEDWLEKFSPWEIVRHDVVFPVRFFGKVQVNPDGSRKWVDGDVVQALAYDVPIPGYGTKNTISLRLWEAKARAEDLDLFQFNEGEYELAAQLHSRAQQICTVLYPGDATENGKLLRLKQQFFLCSASLQDIISRFHERSTTEGSRKWSEFPSKVAVQMNDTHPTLAIPELMRLLMDDNGLGWDEAWDVTSKTVAYTNHTVLPEALEKWSQSLMWKLLPRHMEIIEEIDKRFVQTIRDTRVDLEDKISSLSILDNNPQKPVVRMANLCVVSSHTVNGVAQLHSDILKAELFADYVSIWPNKFQNKTNGITPRRWLRFCSPELSDIITKWLKTDKWITDLDLLTGLRQFADNEELQSEWASAKTANKKRLAQYIERVTGVSIDPTSLFDIQVKRIHEYKRQLMNILGVVYRFKKLKEMKPEERKKTVPRTVMIGGKAFATYTNAKRIVKLVNDVGDVVNSDPEVNEYLKVVFVPNYNVTVAEMLIPGSELSQHISTAGMEASGTSNMKFALNGCLIIGTLDGANVEIREEVGEENFFLFGATADQVPRLRKEREDGLFKPDPRFEEAKQFVKSGVFGSYDYGPLLDSLEGNTGFGRGDYFLVGYDFPSYMDAQAKVDEAYKDRKGWLKMSILSTAGSGKFSSDRTIAQYAKEIWNIEACPVP.

The interval 1-24 (MANANGKAATSLPEKISAKANPEA) is disordered. N6-(pyridoxal phosphate)lysine is present on Lys-687.

This sequence belongs to the glycogen phosphorylase family. Pyridoxal 5'-phosphate is required as a cofactor.

The protein resides in the cytoplasm. It catalyses the reaction [(1-&gt;4)-alpha-D-glucosyl](n) + phosphate = [(1-&gt;4)-alpha-D-glucosyl](n-1) + alpha-D-glucose 1-phosphate. Functionally, phosphorylase is an important allosteric enzyme in carbohydrate metabolism. Enzymes from different sources differ in their regulatory mechanisms and in their natural substrates. However, all known phosphorylases share catalytic and structural properties. The chain is Alpha-glucan phosphorylase 2, cytosolic (PHS2) from Arabidopsis thaliana (Mouse-ear cress).